The chain runs to 702 residues: Methionine--tRNA ligase (702 aa).

The 'HIGH' region signature appears at 14–24 (PYANGPVHLGH). 4 residues coordinate Zn(2+): C146, C149, C159, and C162. Residues 344 to 348 (KFSKS) carry the 'KMSKS' region motif. Residue K347 coordinates ATP. In terms of domain architecture, tRNA-binding spans 601–702 (DFQKVDLRAA…GEKINGSSVQ (102 aa)).

Belongs to the class-I aminoacyl-tRNA synthetase family. MetG type 1 subfamily. In terms of assembly, homodimer. Requires Zn(2+) as cofactor.

The protein resides in the cytoplasm. It carries out the reaction tRNA(Met) + L-methionine + ATP = L-methionyl-tRNA(Met) + AMP + diphosphate. Its function is as follows. Is required not only for elongation of protein synthesis but also for the initiation of all mRNA translation through initiator tRNA(fMet) aminoacylation. The protein is Methionine--tRNA ligase of Chlorobium phaeovibrioides (strain DSM 265 / 1930) (Prosthecochloris vibrioformis (strain DSM 265)).